Here is a 390-residue protein sequence, read N- to C-terminus: Protein arginine N-methyltransferase 1.1 (390 aa).

The span at 1–10 (MTKNSNHDEN) shows a compositional bias: basic and acidic residues. The disordered stretch occupies residues 1–59 (MTKNSNHDENEFISFEPNQNTKIRFEDADEDEVAEGSGVAGEETPQDESMFDAGESADT). The 322-residue stretch at 69–390 (ADYYFDSYSH…ISRTQHYKMR (322 aa)) folds into the SAM-dependent MTase PRMT-type domain. Catalysis depends on residues Glu-181 and Glu-190.

Belongs to the class I-like SAM-binding methyltransferase superfamily. Protein arginine N-methyltransferase family. Interacts with PRMT12, MBD7 and FIB2.

Its subcellular location is the nucleus. The protein resides in the cytoplasm. It carries out the reaction L-arginyl-[protein] + 2 S-adenosyl-L-methionine = N(omega),N(omega)-dimethyl-L-arginyl-[protein] + 2 S-adenosyl-L-homocysteine + 2 H(+). Methylates (mono and asymmetric dimethylation) the guanidino nitrogens of arginyl residues present in a glycine and arginine-rich domain. Type I arginine methyltransferase active on both histones and non-histone proteins. Required for leaves and flowers development. Mediates the methylation of MBD7 and MED36A. In Arabidopsis thaliana (Mouse-ear cress), this protein is Protein arginine N-methyltransferase 1.1 (PRMT11).